The chain runs to 419 residues: UDP-N-acetylglucosamine 1-carboxyvinyltransferase (419 aa).

22 to 23 (KN) provides a ligand contact to phosphoenolpyruvate. R91 serves as a coordination point for UDP-N-acetyl-alpha-D-glucosamine. C115 serves as the catalytic Proton donor. The residue at position 115 (C115) is a 2-(S-cysteinyl)pyruvic acid O-phosphothioketal. Residues 120-124 (RPVDL), 160-163 (KVSV), D305, and I327 contribute to the UDP-N-acetyl-alpha-D-glucosamine site.

This sequence belongs to the EPSP synthase family. MurA subfamily.

It is found in the cytoplasm. It carries out the reaction phosphoenolpyruvate + UDP-N-acetyl-alpha-D-glucosamine = UDP-N-acetyl-3-O-(1-carboxyvinyl)-alpha-D-glucosamine + phosphate. It functions in the pathway cell wall biogenesis; peptidoglycan biosynthesis. Its function is as follows. Cell wall formation. Adds enolpyruvyl to UDP-N-acetylglucosamine. This chain is UDP-N-acetylglucosamine 1-carboxyvinyltransferase, found in Klebsiella pneumoniae (strain 342).